The sequence spans 607 residues: Sulfite reductase [NADPH] flavoprotein alpha-component (607 aa).

One can recognise a Flavodoxin-like domain in the interval 66 to 204; that stretch reads VTILYGSQTG…AAGQWHADVL (139 aa). Residues 72–77, 119–122, and 155–164 contribute to the FMN site; these read SQTGNG, STHG, and LGDSSYEFFC. In terms of domain architecture, FAD-binding FR-type spans 239–456; the sequence is QNPYRAEVLV…VEPNKHFRLP (218 aa). FAD contacts are provided by residues threonine 327, leucine 361, 395–398, 413–415, and 428–431; these read RLYS, TVA, and GGAS. Residues 527–528, 533–537, and aspartate 569 contribute to the NADP(+) site; these read SR and KIYVQ. Tyrosine 607 serves as a coordination point for FAD.

The protein belongs to the NADPH-dependent sulphite reductase flavoprotein subunit CysJ family. It in the N-terminal section; belongs to the flavodoxin family. In the C-terminal section; belongs to the flavoprotein pyridine nucleotide cytochrome reductase family. In terms of assembly, alpha(8)-beta(8). The alpha component is a flavoprotein, the beta component is a hemoprotein. FAD serves as cofactor. The cofactor is FMN.

The enzyme catalyses hydrogen sulfide + 3 NADP(+) + 3 H2O = sulfite + 3 NADPH + 4 H(+). It functions in the pathway sulfur metabolism; hydrogen sulfide biosynthesis; hydrogen sulfide from sulfite (NADPH route): step 1/1. Its function is as follows. Component of the sulfite reductase complex that catalyzes the 6-electron reduction of sulfite to sulfide. This is one of several activities required for the biosynthesis of L-cysteine from sulfate. The flavoprotein component catalyzes the electron flow from NADPH -&gt; FAD -&gt; FMN to the hemoprotein component. In Shewanella oneidensis (strain ATCC 700550 / JCM 31522 / CIP 106686 / LMG 19005 / NCIMB 14063 / MR-1), this protein is Sulfite reductase [NADPH] flavoprotein alpha-component.